The following is a 376-amino-acid chain: CYP enzymes assisting alcohol dehydrogenase (376 aa).

Positions 43, 45, 64, 94, 97, 100, 108, and 173 each coordinate Zn(2+). Threonine 45 lines the NAD(+) pocket. Substrate contacts are provided by threonine 45 and histidine 64. Residues 199 to 204, aspartate 223, lysine 228, 294 to 296, phenylalanine 320, and lysine 371 each bind NAD(+); these read GLGAVG and LGA.

The protein belongs to the zinc-containing alcohol dehydrogenase family. Class-III subfamily. In terms of assembly, homodimer. Zn(2+) is required as a cofactor.

Its pathway is alkaloid biosynthesis. Functionally, may be a positive catalyzer of strictosidine production by assisting secologanin biosynthesis, thus being involved in monoterpene indole alkaloids accumulation. The sequence is that of CYP enzymes assisting alcohol dehydrogenase from Catharanthus roseus (Madagascar periwinkle).